The following is a 100-amino-acid chain: UPF0213 protein YhbQ (100 aa).

The region spanning 2-77 is the GIY-YIG domain; the sequence is TPWFLYLIRT…KQLTKRQKER (76 aa).

Belongs to the UPF0213 family.

This is UPF0213 protein YhbQ from Escherichia coli (strain K12 / MC4100 / BW2952).